A 452-amino-acid polypeptide reads, in one-letter code: tRNA modification GTPase MnmE (452 aa).

Arg-21, Glu-78, and Lys-118 together coordinate (6S)-5-formyl-5,6,7,8-tetrahydrofolate. A TrmE-type G domain is found at 214 to 375 (GMKVVIAGRP…LREHLKQSMG (162 aa)). Asn-224 lines the K(+) pocket. GTP-binding positions include 224–229 (NAGKSS), 243–249 (TDIAGTT), 268–271 (DTAG), and 333–336 (NKAD). Ser-228 is a Mg(2+) binding site. Thr-243, Ile-245, and Thr-248 together coordinate K(+). Thr-249 is a binding site for Mg(2+). Lys-452 contributes to the (6S)-5-formyl-5,6,7,8-tetrahydrofolate binding site.

The protein belongs to the TRAFAC class TrmE-Era-EngA-EngB-Septin-like GTPase superfamily. TrmE GTPase family. As to quaternary structure, homodimer. Heterotetramer of two MnmE and two MnmG subunits. The cofactor is K(+).

Its subcellular location is the cytoplasm. Functionally, exhibits a very high intrinsic GTPase hydrolysis rate. Involved in the addition of a carboxymethylaminomethyl (cmnm) group at the wobble position (U34) of certain tRNAs, forming tRNA-cmnm(5)s(2)U34. In Pasteurella multocida (strain Pm70), this protein is tRNA modification GTPase MnmE.